Here is a 188-residue protein sequence, read N- to C-terminus: Elongation factor P (188 aa).

N6-(3,6-diaminohexanoyl)-5-hydroxylysine is present on Lys-34.

The protein belongs to the elongation factor P family. In terms of processing, may be beta-lysylated on the epsilon-amino group of Lys-34 by the combined action of EpmA and EpmB, and then hydroxylated on the C5 position of the same residue by EpmC (if this protein is present). Lysylation is critical for the stimulatory effect of EF-P on peptide-bond formation. The lysylation moiety may extend toward the peptidyltransferase center and stabilize the terminal 3-CCA end of the tRNA. Hydroxylation of the C5 position on Lys-34 may allow additional potential stabilizing hydrogen-bond interactions with the P-tRNA.

The protein resides in the cytoplasm. It participates in protein biosynthesis; polypeptide chain elongation. Functionally, involved in peptide bond synthesis. Alleviates ribosome stalling that occurs when 3 or more consecutive Pro residues or the sequence PPG is present in a protein, possibly by augmenting the peptidyl transferase activity of the ribosome. Modification of Lys-34 is required for alleviation. The chain is Elongation factor P from Stenotrophomonas maltophilia (strain K279a).